The chain runs to 1224 residues: DNA-directed RNA polymerase subunit beta (1224 aa).

The protein belongs to the RNA polymerase beta chain family. As to quaternary structure, the RNAP catalytic core consists of 2 alpha, 1 beta, 1 beta' and 1 omega subunit. When a sigma factor is associated with the core the holoenzyme is formed, which can initiate transcription.

The enzyme catalyses RNA(n) + a ribonucleoside 5'-triphosphate = RNA(n+1) + diphosphate. In terms of biological role, DNA-dependent RNA polymerase catalyzes the transcription of DNA into RNA using the four ribonucleoside triphosphates as substrates. This chain is DNA-directed RNA polymerase subunit beta, found in Pelotomaculum thermopropionicum (strain DSM 13744 / JCM 10971 / SI).